Reading from the N-terminus, the 713-residue chain is P-loop NTPase domain-containing protein LPA1 homolog (713 aa).

Disordered stretches follow at residues 218 to 249 (AKKRSGISTTSTIDFDKTRPLNDKPDGKPIGK), 504 to 575 (TSQA…EDLS), and 650 to 713 (LDSP…APDK). The span at 231-246 (DFDKTRPLNDKPDGKP) shows a compositional bias: basic and acidic residues. Polar residues predominate over residues 504–531 (TSQAGSVNESWDNANEGTGSHVPSSSGS). Over residues 533–544 (KKLDGHCKEIKE) the composition is skewed to basic and acidic residues. The segment covering 551-562 (SDDDEEEEEEAA) has biased composition (acidic residues). Over residues 656–668 (ARSSSALPISASS) the composition is skewed to low complexity.

Required for the accumulation of phytic acid in seeds. Phytic acid is the primary storage form of phosphorus in cereal grains and other plant seeds. This chain is P-loop NTPase domain-containing protein LPA1 homolog, found in Oryza sativa subsp. japonica (Rice).